A 289-amino-acid polypeptide reads, in one-letter code: RING-H2 finger protein ATL30 (289 aa).

Residues 26 to 46 (VIILTVILLVVFFIGFFAIYF) form a helical membrane-spanning segment. Residues 114-157 (CAICLLEFEEEHILLRLLTTCYHVFHQECIDQWLESNKTCPVCR) form an RING-type; atypical zinc finger. The disordered stretch occupies residues 181-206 (HENRDQEQTSTSNEVMLSRQSSGNNE). The segment covering 188 to 204 (QTSTSNEVMLSRQSSGN) has biased composition (polar residues).

Belongs to the RING-type zinc finger family. ATL subfamily.

It is found in the membrane. The catalysed reaction is S-ubiquitinyl-[E2 ubiquitin-conjugating enzyme]-L-cysteine + [acceptor protein]-L-lysine = [E2 ubiquitin-conjugating enzyme]-L-cysteine + N(6)-ubiquitinyl-[acceptor protein]-L-lysine.. Its pathway is protein modification; protein ubiquitination. The sequence is that of RING-H2 finger protein ATL30 (ATL30) from Arabidopsis thaliana (Mouse-ear cress).